The primary structure comprises 361 residues: Outer mitochondrial transmembrane helix translocase (361 aa).

The Mitochondrial intermembrane portion of the chain corresponds to 1-15; sequence MVHAEAFSRPLSRNE. A helical membrane pass occupies residues 16–32; it reads VVGLIFRLTIFGAVTYF. The Cytoplasmic segment spans residues 33–361; that stretch reads TIKWMVDAID…QSVLTHVCLD (329 aa). 133 to 140 contacts ATP; sequence GPPGCGKT. The residue at position 322 (serine 322) is a Phosphoserine.

The protein belongs to the AAA ATPase family. MSP1 subfamily. In terms of assembly, interacts with GRIA2 and GRIP1 in an ATP-dependent manner. ATAD1-catalyzed ATP hydrolysis disrupts not only its binding to GRIA2 and GRIP1, but also interaction between GRIP1 and GRIA2, leading to AMPAR complex disassembly.

The protein localises to the mitochondrion outer membrane. The protein resides in the peroxisome membrane. Its subcellular location is the postsynaptic cell membrane. The enzyme catalyses [protein]-with a C-terminal TM segment(out) + ATP + H2O = [protein]-with a C-terminal TM segment(in) + ADP + phosphate + H(+). Outer mitochondrial translocase required to remove mislocalized tail-anchored transmembrane proteins on mitochondria. Specifically recognizes and binds tail-anchored transmembrane proteins: acts as a dislocase that mediates the ATP-dependent extraction of mistargeted tail-anchored transmembrane proteins from the mitochondrion outer membrane. Also plays a critical role in regulating the surface expression of AMPA receptors (AMPAR), thereby regulating synaptic plasticity and learning and memory. Required for NMDA-stimulated AMPAR internalization and inhibition of GRIA1 and GRIA2 recycling back to the plasma membrane; these activities are ATPase-dependent. This chain is Outer mitochondrial transmembrane helix translocase, found in Rattus norvegicus (Rat).